Here is a 138-residue protein sequence, read N- to C-terminus: Small ribosomal subunit protein uS11c (138 aa).

The interval 1–21 (MAKSIPKIGSRKTGRIGSRKH) is disordered. A compositionally biased stretch (basic residues) spans 9 to 21 (GSRKTGRIGSRKH).

The protein belongs to the universal ribosomal protein uS11 family. Part of the 30S ribosomal subunit.

Its subcellular location is the plastid. It is found in the chloroplast. This chain is Small ribosomal subunit protein uS11c, found in Pisum sativum (Garden pea).